Consider the following 599-residue polypeptide: Elongation factor 4 (599 aa).

A tr-type G domain is found at Lys3–Ser185. GTP contacts are provided by residues Asp15–Thr20 and Asn132–Asp135.

This sequence belongs to the TRAFAC class translation factor GTPase superfamily. Classic translation factor GTPase family. LepA subfamily.

It localises to the cell membrane. It carries out the reaction GTP + H2O = GDP + phosphate + H(+). Its function is as follows. Required for accurate and efficient protein synthesis under certain stress conditions. May act as a fidelity factor of the translation reaction, by catalyzing a one-codon backward translocation of tRNAs on improperly translocated ribosomes. Back-translocation proceeds from a post-translocation (POST) complex to a pre-translocation (PRE) complex, thus giving elongation factor G a second chance to translocate the tRNAs correctly. Binds to ribosomes in a GTP-dependent manner. The sequence is that of Elongation factor 4 from Syntrophomonas wolfei subsp. wolfei (strain DSM 2245B / Goettingen).